We begin with the raw amino-acid sequence, 653 residues long: UvrABC system protein B (653 aa).

The 158-residue stretch at 25–182 folds into the Helicase ATP-binding domain; the sequence is EGIERGVREQ…EKLVELQYKS (158 aa). 38-45 lines the ATP pocket; that stretch reads GVTGSGKT. The Beta-hairpin motif lies at 91 to 114; that stretch reads YYDYYQPEAYIPHSDVYIEKDALI. The 163-residue stretch at 429–591 folds into the Helicase C-terminal domain; the sequence is QIADVVNESQ…ITPKSISKSV (163 aa). The UVR domain maps to 616-651; the sequence is EEDIIKLQKEMLLHAENLEFEKALEIRNQINKLSQH.

Belongs to the UvrB family. In terms of assembly, forms a heterotetramer with UvrA during the search for lesions. Interacts with UvrC in an incision complex.

It localises to the cytoplasm. Its function is as follows. The UvrABC repair system catalyzes the recognition and processing of DNA lesions. A damage recognition complex composed of 2 UvrA and 2 UvrB subunits scans DNA for abnormalities. Upon binding of the UvrA(2)B(2) complex to a putative damaged site, the DNA wraps around one UvrB monomer. DNA wrap is dependent on ATP binding by UvrB and probably causes local melting of the DNA helix, facilitating insertion of UvrB beta-hairpin between the DNA strands. Then UvrB probes one DNA strand for the presence of a lesion. If a lesion is found the UvrA subunits dissociate and the UvrB-DNA preincision complex is formed. This complex is subsequently bound by UvrC and the second UvrB is released. If no lesion is found, the DNA wraps around the other UvrB subunit that will check the other stand for damage. This is UvrABC system protein B from Anaplasma phagocytophilum (strain HZ).